Here is a 128-residue protein sequence, read N- to C-terminus: Small ribosomal subunit protein uS11 (128 aa).

The protein belongs to the universal ribosomal protein uS11 family. Part of the 30S ribosomal subunit. Interacts with proteins S7 and S18. Binds to IF-3.

Functionally, located on the platform of the 30S subunit, it bridges several disparate RNA helices of the 16S rRNA. Forms part of the Shine-Dalgarno cleft in the 70S ribosome. In Ligilactobacillus salivarius (strain UCC118) (Lactobacillus salivarius), this protein is Small ribosomal subunit protein uS11.